The chain runs to 134 residues: ATP synthase epsilon chain (134 aa).

It belongs to the ATPase epsilon chain family. In terms of assembly, F-type ATPases have 2 components, CF(1) - the catalytic core - and CF(0) - the membrane proton channel. CF(1) has five subunits: alpha(3), beta(3), gamma(1), delta(1), epsilon(1). CF(0) has three main subunits: a, b and c.

The protein resides in the cell membrane. Functionally, produces ATP from ADP in the presence of a proton gradient across the membrane. The sequence is that of ATP synthase epsilon chain from Listeria welshimeri serovar 6b (strain ATCC 35897 / DSM 20650 / CCUG 15529 / CIP 8149 / NCTC 11857 / SLCC 5334 / V8).